Reading from the N-terminus, the 1581-residue chain is Ankyrin repeat domain-containing protein 26 (1581 aa).

The segment at 1-22 (MKKIFGFRSKGPSPLGPSARPR) is disordered. Ser-13 carries the post-translational modification Phosphoserine. 5 ANK repeats span residues 46 to 76 (KDMG…GVND), 80 to 109 (KDRT…EIDA), 113 to 142 (ESST…DPNV), 146 to 175 (SGNT…NIEA), and 179 to 208 (DDLT…SIHA). 4 disordered regions span residues 225-270 (RLQR…FDNK), 299-343 (LDNG…PVEG), 361-381 (SASQ…WHKS), and 488-652 (VLNK…QTAA). The segment covering 229–250 (SENSNPVDNGSEDGSLTRSYNT) has biased composition (polar residues). Phosphoserine occurs at positions 239 and 260. Acidic residues predominate over residues 308 to 319 (SDSPSESEDAIE). Over residues 327-337 (RVQTLSPSRQS) the composition is skewed to polar residues. Basic and acidic residues predominate over residues 367 to 381 (PNHDNLTRADGWHKS). Positions 491-504 (KTETVGMTDAQTFK) are enriched in polar residues. 3 stretches are compositionally biased toward basic and acidic residues: residues 505–516 (SEPESVSREEQT), 524–538 (SQQK…KNNE), and 585–601 (KEAK…REPA). A Phosphoserine modification is found at Ser-511. Coiled-coil stretches lie at residues 715 to 845 (RSHC…NARM), 876 to 1345 (HEKE…MVEH), 1396 to 1470 (RSQM…RSLL), and 1521 to 1550 (LTKM…FCRV).

As to quaternary structure, interacts with TRIO. Interacts with GPS2. Interacts with CCDC85B. Interacts with HMMR. Widely expressed. Expressed in the arcuate and ventromedial nuclei within the hypothalamus and in the ependyma and the circumventricular organs (at protein level).

The protein localises to the cytoplasm. It localises to the cytosol. Acts as a regulator of adipogenesis. Involved in the regulation of the feeding behavior. The chain is Ankyrin repeat domain-containing protein 26 (Ankrd26) from Mus musculus (Mouse).